The chain runs to 212 residues: Thymidylate kinase (212 aa).

Residue 10 to 17 (GPEGAGKT) participates in ATP binding.

Belongs to the thymidylate kinase family.

The enzyme catalyses dTMP + ATP = dTDP + ADP. Phosphorylation of dTMP to form dTDP in both de novo and salvage pathways of dTTP synthesis. The chain is Thymidylate kinase from Bacillus licheniformis (strain ATCC 14580 / DSM 13 / JCM 2505 / CCUG 7422 / NBRC 12200 / NCIMB 9375 / NCTC 10341 / NRRL NRS-1264 / Gibson 46).